The sequence spans 419 residues: UDP-N-acetylglucosamine 1-carboxyvinyltransferase (419 aa).

Residue 22–23 (KN) participates in phosphoenolpyruvate binding. Arg-91 contacts UDP-N-acetyl-alpha-D-glucosamine. Residue Cys-115 is the Proton donor of the active site. A 2-(S-cysteinyl)pyruvic acid O-phosphothioketal modification is found at Cys-115. UDP-N-acetyl-alpha-D-glucosamine-binding positions include 120–124 (RPVDL), 160–163 (KVSV), Asp-305, and Val-327.

This sequence belongs to the EPSP synthase family. MurA subfamily.

The protein localises to the cytoplasm. It carries out the reaction phosphoenolpyruvate + UDP-N-acetyl-alpha-D-glucosamine = UDP-N-acetyl-3-O-(1-carboxyvinyl)-alpha-D-glucosamine + phosphate. It participates in cell wall biogenesis; peptidoglycan biosynthesis. Cell wall formation. Adds enolpyruvyl to UDP-N-acetylglucosamine. This Escherichia fergusonii (strain ATCC 35469 / DSM 13698 / CCUG 18766 / IAM 14443 / JCM 21226 / LMG 7866 / NBRC 102419 / NCTC 12128 / CDC 0568-73) protein is UDP-N-acetylglucosamine 1-carboxyvinyltransferase.